We begin with the raw amino-acid sequence, 297 residues long: Phosphatidylserine decarboxylase proenzyme (297 aa).

Catalysis depends on charge relay system; for autoendoproteolytic cleavage activity residues Asp90, His147, and Ser252. The active-site Schiff-base intermediate with substrate; via pyruvic acid; for decarboxylase activity is Ser252. Pyruvic acid (Ser); by autocatalysis is present on Ser252.

This sequence belongs to the phosphatidylserine decarboxylase family. PSD-B subfamily. Prokaryotic type I sub-subfamily. In terms of assembly, heterodimer of a large membrane-associated beta subunit and a small pyruvoyl-containing alpha subunit. It depends on pyruvate as a cofactor. In terms of processing, is synthesized initially as an inactive proenzyme. Formation of the active enzyme involves a self-maturation process in which the active site pyruvoyl group is generated from an internal serine residue via an autocatalytic post-translational modification. Two non-identical subunits are generated from the proenzyme in this reaction, and the pyruvate is formed at the N-terminus of the alpha chain, which is derived from the carboxyl end of the proenzyme. The autoendoproteolytic cleavage occurs by a canonical serine protease mechanism, in which the side chain hydroxyl group of the serine supplies its oxygen atom to form the C-terminus of the beta chain, while the remainder of the serine residue undergoes an oxidative deamination to produce ammonia and the pyruvoyl prosthetic group on the alpha chain. During this reaction, the Ser that is part of the protease active site of the proenzyme becomes the pyruvoyl prosthetic group, which constitutes an essential element of the active site of the mature decarboxylase.

It localises to the cell membrane. It carries out the reaction a 1,2-diacyl-sn-glycero-3-phospho-L-serine + H(+) = a 1,2-diacyl-sn-glycero-3-phosphoethanolamine + CO2. Its pathway is phospholipid metabolism; phosphatidylethanolamine biosynthesis; phosphatidylethanolamine from CDP-diacylglycerol: step 2/2. Catalyzes the formation of phosphatidylethanolamine (PtdEtn) from phosphatidylserine (PtdSer). In Stutzerimonas stutzeri (strain A1501) (Pseudomonas stutzeri), this protein is Phosphatidylserine decarboxylase proenzyme.